The following is a 479-amino-acid chain: Anaerobic nitric oxide reductase flavorubredoxin (479 aa).

Positions 30–210 (LRGSSYNSYL…PFSRLVTPKI (181 aa)) are zinc metallo-hydrolase. Fe cation-binding residues include H79, E81, D83, H147, D166, and H227. A Flavodoxin-like domain is found at 254–393 (ITIFYDTMSN…LCRQHGRDIA (140 aa)). Residues 260–264 (TMSNN) and 342–369 (AFGSHGWSGGAVDRLSTRLQDAGFEMSL) contribute to the FMN site. The Rubredoxin-like domain maps to 423–474 (GPKMQCSVCQWIYDPALGEPLQDVAPGTPWSDVPDNFLCPECSLGKDVFDVL). Positions 428, 431, 461, and 464 each coordinate Fe cation.

The protein in the N-terminal section; belongs to the zinc metallo-hydrolase group 3 family. As to quaternary structure, homotetramer. Fe cation serves as cofactor. Requires FMN as cofactor.

The protein localises to the cytoplasm. The protein operates within nitrogen metabolism; nitric oxide reduction. Its function is as follows. Anaerobic nitric oxide reductase; uses NADH to detoxify nitric oxide (NO), protecting several 4Fe-4S NO-sensitive enzymes. Has at least 2 reductase partners, only one of which (NorW, flavorubredoxin reductase) has been identified. NO probably binds to the di-iron center; electrons enter from the NorW at rubredoxin and are transferred sequentially to the FMN center and the di-iron center. Also able to function as an aerobic oxygen reductase. The chain is Anaerobic nitric oxide reductase flavorubredoxin from Salmonella paratyphi B (strain ATCC BAA-1250 / SPB7).